A 119-amino-acid polypeptide reads, in one-letter code: Large ribosomal subunit protein bL20 (119 aa).

It belongs to the bacterial ribosomal protein bL20 family.

Binds directly to 23S ribosomal RNA and is necessary for the in vitro assembly process of the 50S ribosomal subunit. It is not involved in the protein synthesizing functions of that subunit. This chain is Large ribosomal subunit protein bL20, found in Streptococcus suis (strain 98HAH33).